A 1474-amino-acid polypeptide reads, in one-letter code: SH3 and multiple ankyrin repeat domains protein 2 (1474 aa).

Residues 66 to 76 (LSPQLLQQTPS) are compositionally biased toward polar residues. The disordered stretch occupies residues 66–125 (LSPQLLQQTPSKPDGATKSLGSYAPGPRSRSPSLNRLGGAGEDGKRPQPPHWHVGSPFTP). An SH3 domain is found at 148–207 (VPGRLFVAIKPYQPQVDGEIPLHRGDRVKVLSIGEGGFWEGSARGHIGWFPAECVEEVQC). The residue at position 162 (glutamine 162) is a Phosphoserine. Positions 248 to 342 (TVVLQKKDNE…HLVLKVVTVT (95 aa)) constitute a PDZ domain. At serine 373 the chain carries Phosphoserine. Residues 392–413 (RKKKDKPEEIVPASKPSRTAEN) form a disordered region. Serine 457 is subject to Phosphoserine. Position 486 is a phosphothreonine (threonine 486). A disordered region spans residues 504 to 534 (LSMPDTSEDIPPPPQSVPPSPPPPSPTTYNC). The segment covering 513 to 529 (IPPPPQSVPPSPPPPSP) has biased composition (pro residues). At serine 586 the chain carries Phosphoserine. 3 disordered regions span residues 659–920 (TIIV…ADDK), 947–995 (PVAG…PAAA), and 1057–1153 (PALA…ESMD). Low complexity predominate over residues 666–678 (STSSSGKSSQGSS). Residues 711-722 (VRDREKRLEARR) show a composition bias toward basic and acidic residues. Residue serine 724 is modified to Phosphoserine. The span at 783 to 795 (LGGGEAGAQGEAG) shows a compositional bias: gly residues. Low complexity-rich tracts occupy residues 811 to 823 (PAAALKSSSPASP) and 833 to 846 (RLLDPSSPLALALS). Basic and acidic residues-rich tracts occupy residues 847–868 (ARDRAMQESQQGHKGEAPKADL) and 899–920 (RRQETENKYETDLSKDRRADDK). Threonine 903 carries the phosphothreonine modification. The segment covering 1075–1085 (SLNSSQPANST) has biased composition (polar residues). Basic and acidic residues predominate over residues 1119–1130 (VDSRSSSDHHLE). The span at 1131 to 1151 (TTSTISTVSSISTLSSEGGES) shows a compositional bias: low complexity. An SH3-binding motif is present at residues 1169-1175 (PPVPPKP). Disordered stretches follow at residues 1195–1216 (EDTDGFVIPPPAPPPPPGSAQA) and 1260–1401 (NRGK…ISNK). Positions 1202 to 1212 (IPPPAPPPPPG) are enriched in pro residues. Low complexity predominate over residues 1291 to 1305 (STVSGTRSTTVTFTV). The O-linked (GlcNAc) threonine glycan is linked to threonine 1292. Positions 1307–1317 (PGTSQPITLQS) are enriched in polar residues. 2 positions are modified to phosphoserine: serine 1334 and serine 1338. 2 stretches are compositionally biased toward low complexity: residues 1352 to 1363 (SAAAASPSPTLS) and 1385 to 1399 (RSRSPSPSILQQPIS). In terms of domain architecture, SAM spans 1411 to 1474 (WTKPDVADWL…ERALKQLLDR (64 aa)).

Belongs to the SHANK family. As to quaternary structure, is part of a complex with DLG4/PSD-95 and DLGAP1/GKAP. Interacts with CTTN/cortactin SH3 domain, DLGAP1/GKAP and alpha-latrotoxin receptor 1. Interacts with DNM2, DBNL, GRID2, BAIAP2, SLC9A3, PLCB3 and CFTR. Interacts with ABI1 (via SH3 domain). Interacts (via proline-rich region) with PDE4D isoform 5 (via N-terminal region). Interacts with PDE4D isoform 33, isoform 4, isoform 7, isoform 8 and isoform 9 but not isoform 32 and isoform 6. Interacts weakly with PDE4D isoform 31. Interacts with ABI1. In terms of tissue distribution, expressed in epithelial cells (at protein level). All isoforms except isoform 7 are expressed predominantly in brain, with highest levels in olfactory bulb, cerebral cortex, cerebellum, central gray matter and hippocampus. Moderate levels of expression are seen in the caudate putamen, thalamic nuclei and brain stem. In cerebellum primarily expressed in Purkinje cells. Isoform 7 is not expressed in brain but expressed in liver, cholangiocytes and thymus. Isoform 7 is present in pancreas, colonic mucosa and thymocytes (at protein level).

The protein resides in the apical cell membrane. It is found in the cytoplasm. Its subcellular location is the synapse. It localises to the postsynaptic density. The protein localises to the cell projection. The protein resides in the growth cone. It is found in the dendritic spine. Functionally, seems to be an adapter protein in the postsynaptic density (PSD) of excitatory synapses that interconnects receptors of the postsynaptic membrane including NMDA-type and metabotropic glutamate receptors, and the actin-based cytoskeleton. May play a role in the structural and functional organization of the dendritic spine and synaptic junction. In Rattus norvegicus (Rat), this protein is SH3 and multiple ankyrin repeat domains protein 2 (Shank2).